The following is a 191-amino-acid chain: Orotate phosphoribosyltransferase (191 aa).

Glu-114–Ser-122 lines the 5-phospho-alpha-D-ribose 1-diphosphate pocket. Residues Thr-118 and Arg-146 each coordinate orotate.

Belongs to the purine/pyrimidine phosphoribosyltransferase family. PyrE subfamily. In terms of assembly, homodimer. Mg(2+) serves as cofactor.

The enzyme catalyses orotidine 5'-phosphate + diphosphate = orotate + 5-phospho-alpha-D-ribose 1-diphosphate. The protein operates within pyrimidine metabolism; UMP biosynthesis via de novo pathway; UMP from orotate: step 1/2. Its function is as follows. Catalyzes the transfer of a ribosyl phosphate group from 5-phosphoribose 1-diphosphate to orotate, leading to the formation of orotidine monophosphate (OMP). This Desulforamulus reducens (strain ATCC BAA-1160 / DSM 100696 / MI-1) (Desulfotomaculum reducens) protein is Orotate phosphoribosyltransferase.